The sequence spans 962 residues: Glycine dehydrogenase (decarboxylating) (962 aa).

An N6-(pyridoxal phosphate)lysine modification is found at lysine 709.

This sequence belongs to the GcvP family. As to quaternary structure, the glycine cleavage system is composed of four proteins: P, T, L and H. The cofactor is pyridoxal 5'-phosphate.

It catalyses the reaction N(6)-[(R)-lipoyl]-L-lysyl-[glycine-cleavage complex H protein] + glycine + H(+) = N(6)-[(R)-S(8)-aminomethyldihydrolipoyl]-L-lysyl-[glycine-cleavage complex H protein] + CO2. The glycine cleavage system catalyzes the degradation of glycine. The P protein binds the alpha-amino group of glycine through its pyridoxal phosphate cofactor; CO(2) is released and the remaining methylamine moiety is then transferred to the lipoamide cofactor of the H protein. This is Glycine dehydrogenase (decarboxylating) from Shewanella sp. (strain MR-4).